The following is a 164-amino-acid chain: Ferredoxin-type protein NapF (164 aa).

4Fe-4S ferredoxin-type domains are found at residues 28–57, 58–89, and 132–161; these read GDESHFLTHCTRCDACINACENNILQRGAG, GYPSVNFKNNECSFCYACAQACPESLFSPRHT, and YQPQLNSQLCNGCGACAASCPVSAITAEYL. [4Fe-4S] cluster is bound by residues Cys37, Cys40, Cys43, Cys47, Cys69, Cys72, Cys75, Cys79, Cys141, Cys144, Cys147, and Cys151.

Belongs to the NapF family. Interacts with the cytoplasmic NapA precursor. Requires [4Fe-4S] cluster as cofactor.

The protein resides in the cytoplasm. Functionally, could be involved in the maturation of NapA, the catalytic subunit of the periplasmic nitrate reductase, before its export into the periplasm. The sequence is that of Ferredoxin-type protein NapF from Escherichia coli O157:H7.